The chain runs to 303 residues: Taste receptor type 2 member 13 (303 aa).

Residues 1–7 (MESALPS) are Extracellular-facing. Residues 8 to 28 (IFTLVIIAEFIIGNLSNGFIV) form a helical membrane-spanning segment. Over 29 to 55 (LINCIDWVSKRELSSVDKLLIILAISR) the chain is Cytoplasmic. The helical transmembrane segment at 56–76 (IGLIWEILVSWFLALHSLAIF) threads the bilayer. Residues 77-85 (VSGTGLRIM) are Extracellular-facing. The helical transmembrane segment at 86-106 (IFSWIVSNHFNLWLATILSIF) threads the bilayer. Over 107–128 (YLLKIASFSSPAFLYLKRRVNK) the chain is Cytoplasmic. The helical transmembrane segment at 129 to 149 (VILMILLGTLVFLFLNLIQIN) threads the bilayer. The Extracellular segment spans residues 150-184 (MLIKDWLDRYERNTTWNFSMSDFETFSVSVRFTMT). 2 N-linked (GlcNAc...) asparagine glycosylation sites follow: N162 and N166. A helical transmembrane segment spans residues 185-205 (MFSLTPFTVAFISFLLLVFSL). Residues 206 to 232 (QKHLQKMQLNYKGHRDPRTKVHTNALK) are Cytoplasmic-facing. A helical membrane pass occupies residues 233-253 (IVISFLLFYASFFLSILISWI). Topologically, residues 254–261 (SELYQNTV) are extracellular. Residues 262–282 (IYMLCETIGAFYPSSHSFLLI) traverse the membrane as a helical segment. Residues 283–303 (LGNAKLRQAFLLVAAKVWAKR) lie on the Cytoplasmic side of the membrane.

This sequence belongs to the G-protein coupled receptor T2R family.

Its subcellular location is the membrane. In terms of biological role, receptor that may play a role in the perception of bitterness and is gustducin-linked. May play a role in sensing the chemical composition of the gastrointestinal content. The activity of this receptor may stimulate alpha gustducin, mediate PLC-beta-2 activation and lead to the gating of TRPM5. This Pan paniscus (Pygmy chimpanzee) protein is Taste receptor type 2 member 13 (TAS2R13).